Reading from the N-terminus, the 615-residue chain is Dihydroxy-acid dehydratase (615 aa).

Asp81 is a Mg(2+) binding site. Cys122 is a binding site for [2Fe-2S] cluster. Mg(2+) is bound by residues Asp123 and Lys124. Lys124 is subject to N6-carboxylysine. Residue Cys195 participates in [2Fe-2S] cluster binding. Glu491 is a binding site for Mg(2+). The Proton acceptor role is filled by Ser517.

This sequence belongs to the IlvD/Edd family. As to quaternary structure, homodimer. [2Fe-2S] cluster is required as a cofactor. Mg(2+) serves as cofactor.

The catalysed reaction is (2R)-2,3-dihydroxy-3-methylbutanoate = 3-methyl-2-oxobutanoate + H2O. The enzyme catalyses (2R,3R)-2,3-dihydroxy-3-methylpentanoate = (S)-3-methyl-2-oxopentanoate + H2O. Its pathway is amino-acid biosynthesis; L-isoleucine biosynthesis; L-isoleucine from 2-oxobutanoate: step 3/4. It participates in amino-acid biosynthesis; L-valine biosynthesis; L-valine from pyruvate: step 3/4. Its function is as follows. Functions in the biosynthesis of branched-chain amino acids. Catalyzes the dehydration of (2R,3R)-2,3-dihydroxy-3-methylpentanoate (2,3-dihydroxy-3-methylvalerate) into 2-oxo-3-methylpentanoate (2-oxo-3-methylvalerate) and of (2R)-2,3-dihydroxy-3-methylbutanoate (2,3-dihydroxyisovalerate) into 2-oxo-3-methylbutanoate (2-oxoisovalerate), the penultimate precursor to L-isoleucine and L-valine, respectively. The polypeptide is Dihydroxy-acid dehydratase (Shewanella piezotolerans (strain WP3 / JCM 13877)).